Reading from the N-terminus, the 371-residue chain is Protein arginine N-methyltransferase 1 (371 aa).

Positions 50–361 constitute an SAM-dependent MTase PRMT-type domain; sequence KDYYFDSYAH…DLDFKGQLCE (312 aa). S-adenosyl-L-methionine is bound by residues His63, Arg72, Gly96, and Glu118. Arg72 contacts S-adenosyl-L-homocysteine. Glu118 contributes to the S-adenosyl-L-homocysteine binding site. Position 134 is an N6-succinyllysine (Lys134). Lys145 is covalently cross-linked (Glycyl lysine isopeptide (Lys-Gly) (interchain with G-Cter in ubiquitin)). S-adenosyl-L-homocysteine contacts are provided by Val146 and Glu147. Residue Glu147 coordinates S-adenosyl-L-methionine. Catalysis depends on residues Glu162 and Glu171. An N6-acetyllysine mark is found at Lys228 and Lys233. 2 positions are modified to phosphoserine: Ser304 and Ser307.

Belongs to the class I-like SAM-binding methyltransferase superfamily. Protein arginine N-methyltransferase family. Homodimer. Homooctamer; individual homodimers associates to form a homooctamer. Individual homodimers can associate to form a homohexamer. Heterodimer with PRMT8. Interacts with BTG1, BTG2, NFATC2IP and IFNAR1. Interacts with and methylates CHTOP, thereby enabling the interaction of CHTOP with the 5FMC complex. Interacts with ILF3 and SUPT5H. Interacts with and methylates FOXO1, leading to the nuclear retention of FOXO1 and the stimulation of FOXO1 transcriptional activity. Methylation of FOXO1 is increased upon oxidative stress. Interacts with and probably methylates ATXN2L. Component of the methylosome, a 20S complex containing at least CLNS1A/pICln, PRMT5/SKB1, WDR77/MEP50, PRMT1 and ERH. Interacts with DHX9 (via RGG region). Interacts (via N-terminus) with HABP4. Interacts with MAP3K5/ASK1; the interaction results in MAP3K5 methylation by PRMT1 which inhibits MAP3K5 activation. Interacts with TRIM48; the interaction results in ubiquitination of PRMT1 by TRIM48, leading to PRMT1 proteasomal degradation and activation of MAP3K5. Interacts with GATOR1 complex; this interaction is S-adenosyl-L-methionine (SAM) dependent and is perturbated by SAMTOR in a SAM-sensitive manner. Interacts with GFI1; promoting recognition and binding of MRE11 and TP53BP1 substrates by PRMT1. In terms of processing, polyubiquitinated at Lys-145 by the SCF(FBXL17) complex, leading to its subsequent degradation. Ubiquitination is regulated by acetylation at Lys-228 and Lys-233. Polyubiquitinated by E3 ubiquitin-protein ligase TRIM48, leading to suppression of MAP3K5/ASK1 methylation and subsequent MAP3K5 activation. Acetylation at Lys-228 and Lys-233 regulates ubiquitination by the SCF(FBXL17) complex. Acetylated at Lys-233 by p300/EP300. Deacetylated at Lys-228 and Lys-233 by SIRT1. Widely expressed. Expressed strongly in colorectal cancer cells (at protein level). Expressed strongly in colorectal cancer tissues compared to wild-type colon samples (at protein level). Expressed strongly in colorectal cancer tissues compared to wild-type colon samples.

It localises to the nucleus. It is found in the nucleoplasm. The protein resides in the cytoplasm. Its subcellular location is the cytosol. The protein localises to the lysosome membrane. The catalysed reaction is L-arginyl-[protein] + 2 S-adenosyl-L-methionine = N(omega),N(omega)-dimethyl-L-arginyl-[protein] + 2 S-adenosyl-L-homocysteine + 2 H(+). It catalyses the reaction L-arginyl-[protein] + S-adenosyl-L-methionine = N(omega)-methyl-L-arginyl-[protein] + S-adenosyl-L-homocysteine + H(+). It carries out the reaction N(omega)-methyl-L-arginyl-[protein] + S-adenosyl-L-methionine = N(omega),N(omega)-dimethyl-L-arginyl-[protein] + S-adenosyl-L-homocysteine + H(+). Functionally, arginine methyltransferase that methylates (mono and asymmetric dimethylation) the guanidino nitrogens of arginyl residues present in proteins such as ESR1, histone H2, H3 and H4, FMR1, ILF3, HNRNPA1, HNRNPD, NFATC2IP, SUPT5H, TAF15, EWS, HABP4, SERBP1, RBM15, FOXO1, CHTOP, MAP3K5/ASK1, MICU1 and NPRL2. Constitutes the main enzyme that mediates monomethylation and asymmetric dimethylation of histone H4 'Arg-3' (H4R3me1 and H4R3me2a, respectively), a specific tag for epigenetic transcriptional activation. May be involved in the regulation of TAF15 transcriptional activity, act as an activator of estrogen receptor (ER)-mediated transactivation, play a key role in neurite outgrowth and act as a negative regulator of megakaryocytic differentiation, by modulating p38 MAPK pathway. Methylates RBM15, promoting ubiquitination and degradation of RBM15. Methylates MRE11 and TP53BP1, promoting the DNA damage response. Methylates FOXO1 and retains it in the nucleus increasing its transcriptional activity. Methylates CHTOP and this methylation is critical for its 5-hydroxymethylcytosine (5hmC)-binding activity. Methylates MAP3K5/ASK1 at 'Arg-78' and 'Arg-80' which promotes association of MAP3K5 with thioredoxin and negatively regulates MAP3K5 association with TRAF2, inhibiting MAP3K5 stimulation and MAP3K5-induced activation of JNK. Methylates H4R3 in genes involved in glioblastomagenesis in a CHTOP- and/or TET1-dependent manner. Plays a role in regulating alternative splicing in the heart. Methylates NPRL2 at 'Arg-78' leading to inhibition of its GTPase activator activity and then the GATOR1 complex and consequently inducing timely mTORC1 activation under methionine-sufficient conditions. This is Protein arginine N-methyltransferase 1 from Homo sapiens (Human).